We begin with the raw amino-acid sequence, 303 residues long: uncharacterized protein (303 aa).

This is an uncharacterized protein from Leptospira interrogans.